The primary structure comprises 320 residues: MQTRNTFSWIKEEITRSISVSLMIYIITGASISNAYPIFAQQGYENPREATGRIVCANCHLANKPVDIEVPQAVLPDTVFEAVVRIPYDMQLKQVLANGKKGALNVGAVLILPEGFELAPPDRISPEMKEKIGNLSFQNYRPTKKNILVIGPVPGKKYSEITFPILSPDPASNKDAHFLKYPIYVGGNRGRGQIYPDGNKSNNTVYNATATGIISKIIRKEKGGYEITITDALDGHQVVDIIPPGPELLVSEGESIKLDQPLTINPNVGGFGQGDAEIVLQDPLRVQGLLFFLASIVFAQIFLVLKKKQFEKVQVSEMNF.

Positions 1–35 (MQTRNTFSWIKEEITRSISVSLMIYIITGASISNA) are cleaved as a signal peptide. Heme-binding residues include tyrosine 36, cysteine 56, cysteine 59, and histidine 60. Residues 286–306 (VQGLLFFLASIVFAQIFLVLK) form a helical membrane-spanning segment.

This sequence belongs to the cytochrome f family. As to quaternary structure, the 4 large subunits of the cytochrome b6-f complex are cytochrome b6, subunit IV (17 kDa polypeptide, petD), cytochrome f and the Rieske protein, while the 4 small subunits are PetG, PetL, PetM and PetN. The complex functions as a dimer. The cofactor is heme.

The protein localises to the plastid. It localises to the chloroplast thylakoid membrane. Component of the cytochrome b6-f complex, which mediates electron transfer between photosystem II (PSII) and photosystem I (PSI), cyclic electron flow around PSI, and state transitions. In Gossypium barbadense (Sea Island cotton), this protein is Cytochrome f.